The following is a 496-amino-acid chain: Thiamine transporter 2 (496 aa).

At 1 to 7 (MDCYRTS) the chain is on the cytoplasmic side. Residues 8–28 (LSSSWIYPTVILCLFGFFSMM) form a helical membrane-spanning segment. At 29–53 (RPSEPFLIPYLSGPDKNLTSAEITN) the chain is on the extracellular side. An N-linked (GlcNAc...) asparagine glycan is attached at Asn-45. Residues 54–74 (EIFPVWTYSYLVLLLPVFVLT) form a helical membrane-spanning segment. Over 75 to 81 (DYVRYKP) the chain is Cytoplasmic. A helical membrane pass occupies residues 82–102 (VIILQGISFIITWLLLLFGQG). At 103–110 (VKTMQVVE) the chain is on the extracellular side. The helical transmembrane segment at 111-131 (FFYGMVTAAEVAYYAYIYSVV) threads the bilayer. At 132-144 (SPEHYQRVSGYCR) the chain is on the cytoplasmic side. The helical transmembrane segment at 145-165 (SVTLAAYTAGSVLAQLLVSLA) threads the bilayer. The N-linked (GlcNAc...) asparagine glycan is linked to Asn-166. Over 166–169 (NMSY) the chain is Extracellular. A helical transmembrane segment spans residues 170-190 (FYLNVISLASVSVAFLFSLFL). Residues 191-282 (PMPKKSMFFH…YSSKRLFYWS (92 aa)) are Cytoplasmic-facing. A helical membrane pass occupies residues 283-303 (LWWAFATAGFNQVLNYVQILW). Residues 304–316 (DYKAPSQDSSIYN) lie on the Extracellular side of the membrane. Residues 317-337 (GAVEAIATFGGAVAAFAVGYV) traverse the membrane as a helical segment. Residues 338–342 (KVNWD) are Cytoplasmic-facing. Residues 343–363 (LLGELALVVFSVVNAGSLFLM) form a helical membrane-spanning segment. Over 364–375 (HYTANIWACYAG) the chain is Extracellular. A helical transmembrane segment spans residues 376–396 (YLIFKSSYMLLITIAVFQIAV). Topologically, residues 397 to 405 (NLNVERYAL) are cytoplasmic. Residues 406–426 (VFGINTFIALVIQTIMTVIVV) traverse the membrane as a helical segment. Residues 427 to 434 (DQRGLNLP) lie on the Extracellular side of the membrane. The helical transmembrane segment at 435 to 455 (VSIQFLVYGSYFAVIAGIFLM) threads the bilayer. The Cytoplasmic segment spans residues 456 to 496 (RSMYITYSTKSQKDVQSPAPSENPDVSHPEEESNIIMSTKL). Positions 468-496 (KDVQSPAPSENPDVSHPEEESNIIMSTKL) are disordered.

The protein belongs to the reduced folate carrier (RFC) transporter (TC 2.A.48) family. As to expression, widely expressed but most abundant in placenta, kidney and liver.

It localises to the membrane. The catalysed reaction is thiamine(out) + H(+)(in) = thiamine(in) + H(+)(out). It carries out the reaction pyridoxine(out) + n H(+)(out) = pyridoxine(in) + n H(+)(in). Its activity is regulated as follows. Pyridoxine transport is inhibited by carbonyl cyanide p-trifluoromethoxyphenylhydrazone (FCCP) and carbonyl cyanide m-chlorophenylhydrazone (CCCP). Mediates high affinity thiamine uptake, probably via a proton anti-port mechanism. Has no folate transport activity. Mediates H(+)-dependent pyridoxine transport. The sequence is that of Thiamine transporter 2 (SLC19A3) from Homo sapiens (Human).